A 103-amino-acid polypeptide reads, in one-letter code: Large ribosomal subunit protein bL21 (103 aa).

This sequence belongs to the bacterial ribosomal protein bL21 family. Part of the 50S ribosomal subunit. Contacts protein L20.

This protein binds to 23S rRNA in the presence of protein L20. In Mycobacteroides abscessus (strain ATCC 19977 / DSM 44196 / CCUG 20993 / CIP 104536 / JCM 13569 / NCTC 13031 / TMC 1543 / L948) (Mycobacterium abscessus), this protein is Large ribosomal subunit protein bL21.